The chain runs to 434 residues: Pyrichalasin H cluster regulator BC2 (434 aa).

2 disordered regions span residues 297-321 and 362-383; these read GSSPSGTPESELTSPHKRATTCSPL and HPGHEDHQQQQEEVKQHDRLSH. A compositionally biased stretch (polar residues) spans 298 to 309; sequence SSPSGTPESELT. Positions 362-380 are enriched in basic and acidic residues; the sequence is HPGHEDHQQQQEEVKQHDR.

The protein localises to the nucleus. Transcription factor probably involved in regulation of gene cluster that mediates the biosynthesis of a tyrosine-derived cytochalasan acting as a fungal signal recognized by resistant rice plants and leads to avirulence in Pi33 resistant rice cultivars. The sequence is that of Pyrichalasin H cluster regulator BC2 from Pyricularia oryzae (strain 70-15 / ATCC MYA-4617 / FGSC 8958) (Rice blast fungus).